The following is a 462-amino-acid chain: A-type ATP synthase subunit B (462 aa).

This sequence belongs to the ATPase alpha/beta chains family. As to quaternary structure, has multiple subunits with at least A(3), B(3), C, D, E, F, H, I and proteolipid K(x).

The protein localises to the cell membrane. Component of the A-type ATP synthase that produces ATP from ADP in the presence of a proton gradient across the membrane. The B chain is a regulatory subunit. This Methanococcus maripaludis (strain DSM 14266 / JCM 13030 / NBRC 101832 / S2 / LL) protein is A-type ATP synthase subunit B.